Consider the following 787-residue polypeptide: DNA ligase (787 aa).

Residues 32–36 (DVEYD), 81–82 (SL), and E121 contribute to the NAD(+) site. Catalysis depends on K123, which acts as the N6-AMP-lysine intermediate. NAD(+)-binding residues include R144, E181, K297, and K321. 4 residues coordinate Zn(2+): C415, C418, C445, and C451. Positions 703 to 787 (VEGLPLAGQT…RLTELGVAVD (85 aa)) constitute a BRCT domain.

Belongs to the NAD-dependent DNA ligase family. LigA subfamily. Mg(2+) is required as a cofactor. Requires Mn(2+) as cofactor.

The catalysed reaction is NAD(+) + (deoxyribonucleotide)n-3'-hydroxyl + 5'-phospho-(deoxyribonucleotide)m = (deoxyribonucleotide)n+m + AMP + beta-nicotinamide D-nucleotide.. In terms of biological role, DNA ligase that catalyzes the formation of phosphodiester linkages between 5'-phosphoryl and 3'-hydroxyl groups in double-stranded DNA using NAD as a coenzyme and as the energy source for the reaction. It is essential for DNA replication and repair of damaged DNA. This Pseudomonas savastanoi pv. phaseolicola (strain 1448A / Race 6) (Pseudomonas syringae pv. phaseolicola (strain 1448A / Race 6)) protein is DNA ligase.